An 83-amino-acid polypeptide reads, in one-letter code: Small ribosomal subunit protein eS21 (83 aa).

It belongs to the eukaryotic ribosomal protein eS21 family. As to quaternary structure, component of the 40S small ribosomal subunit.

Its subcellular location is the cytoplasm. The protein localises to the cytosol. It localises to the rough endoplasmic reticulum. This chain is Small ribosomal subunit protein eS21 (RpS21), found in Agriotes lineatus (Lined click beetle).